The primary structure comprises 178 residues: MADELSEKSVEGTEEDGESAPAEGTTEGVPVDEVAKLRQELEDVKRIADERLEQLLRCRAELDNVIKRNSREREELARFASEAIIKKLLVFLDSLEQAAKHDEGAKALYDQLLDIMRSEGLEPIDAVGKKFDPFVHEAMMQVESQEAEDGIVVQEFQKGYTLHSRVIRTSKVAVAKHG.

Basic and acidic residues predominate over residues 1-11; that stretch reads MADELSEKSVE. The tract at residues 1-32 is disordered; the sequence is MADELSEKSVEGTEEDGESAPAEGTTEGVPVD.

It belongs to the GrpE family. In terms of assembly, homodimer.

The protein localises to the cytoplasm. Its function is as follows. Participates actively in the response to hyperosmotic and heat shock by preventing the aggregation of stress-denatured proteins, in association with DnaK and GrpE. It is the nucleotide exchange factor for DnaK and may function as a thermosensor. Unfolded proteins bind initially to DnaJ; upon interaction with the DnaJ-bound protein, DnaK hydrolyzes its bound ATP, resulting in the formation of a stable complex. GrpE releases ADP from DnaK; ATP binding to DnaK triggers the release of the substrate protein, thus completing the reaction cycle. Several rounds of ATP-dependent interactions between DnaJ, DnaK and GrpE are required for fully efficient folding. The sequence is that of Protein GrpE from Methanothrix thermoacetophila (strain DSM 6194 / JCM 14653 / NBRC 101360 / PT) (Methanosaeta thermophila).